Reading from the N-terminus, the 291-residue chain is Asialoglycoprotein receptor 1 (291 aa).

The segment covering 1-19 has biased composition (basic and acidic residues); that stretch reads MTKECQDLQHLDNEESDHH. Residues 1 to 27 are disordered; the sequence is MTKECQDLQHLDNEESDHHQLRKGPPP. The Cytoplasmic portion of the chain corresponds to 1–40; that stretch reads MTKECQDLQHLDNEESDHHQLRKGPPPSQPLLQRLCSGPR. An Endocytosis signal motif is present at residues 5-8; that stretch reads CQDL. Position 16 is a phosphoserine (Ser-16). Cys-36 is lipidated: S-palmitoyl cysteine. Residues 41–61 traverse the membrane as a helical; Signal-anchor for type II membrane protein segment; that stretch reads LLLLSLGLSLLLLVVVCVIGS. Residues 61–123 adopt a coiled-coil conformation; the sequence is SQNSQLQKEL…KDLSEDHSSL (63 aa). Residues 62–291 lie on the Extracellular side of the membrane; the sequence is QNSQLQKELR…DKASQEPPLL (230 aa). Residues Asn-79 and Asn-147 are each glycosylated (N-linked (GlcNAc...) asparagine). 3 cysteine pairs are disulfide-bonded: Cys-154-Cys-165, Cys-182-Cys-277, and Cys-255-Cys-269. The region spanning 161 to 278 is the C-type lectin domain; it reads HERSCYWFSR…CQRPYRWVCE (118 aa). Val-191, Glu-197, Asp-216, Gln-240, Asp-242, Asp-243, Glu-253, Asp-254, Asn-265, Asp-266, and Glu-278 together coordinate Ca(2+). Phosphoserine is present on Ser-285.

In terms of assembly, interacts with LASS2. Phosphorylated on a cytoplasmic Ser residue.

It localises to the membrane. In terms of biological role, mediates the endocytosis of plasma glycoproteins to which the terminal sialic acid residue on their complex carbohydrate moieties has been removed. The receptor recognizes terminal galactose and N-acetylgalactosamine units. After ligand binding to the receptor, the resulting complex is internalized and transported to a sorting organelle, where receptor and ligand are disassociated. The receptor then returns to the cell membrane surface. In Pongo abelii (Sumatran orangutan), this protein is Asialoglycoprotein receptor 1 (ASGR1).